The following is a 363-amino-acid chain: Spermidine/putrescine import ATP-binding protein PotA (363 aa).

The ABC transporter domain occupies 6–236 (VEFKNVIKKY…PINHFVADFI (231 aa)). 38-45 (GPSGCGKT) contacts ATP.

This sequence belongs to the ABC transporter superfamily. Spermidine/putrescine importer (TC 3.A.1.11.1) family. As to quaternary structure, the complex is composed of two ATP-binding proteins (PotA), two transmembrane proteins (PotB and PotC) and a solute-binding protein (PotD).

The protein resides in the cell membrane. It carries out the reaction ATP + H2O + polyamine-[polyamine-binding protein]Side 1 = ADP + phosphate + polyamineSide 2 + [polyamine-binding protein]Side 1.. Part of the ABC transporter complex PotABCD involved in spermidine/putrescine import. Responsible for energy coupling to the transport system. The protein is Spermidine/putrescine import ATP-binding protein PotA of Latilactobacillus sakei subsp. sakei (strain 23K) (Lactobacillus sakei subsp. sakei).